An 802-amino-acid chain; its full sequence is DNA mismatch repair protein MutS (802 aa).

Residue 617 to 624 coordinates ATP; the sequence is GPNMGGKS.

Belongs to the DNA mismatch repair MutS family.

Functionally, this protein is involved in the repair of mismatches in DNA. It is possible that it carries out the mismatch recognition step. This protein has a weak ATPase activity. The sequence is that of DNA mismatch repair protein MutS from Buchnera aphidicola subsp. Acyrthosiphon pisum (strain 5A).